Reading from the N-terminus, the 283-residue chain is Pantothenate synthetase (283 aa).

31–38 contacts ATP; it reads MGALHEGH. Histidine 38 functions as the Proton donor in the catalytic mechanism. (R)-pantoate is bound at residue glutamine 62. Glutamine 62 contacts beta-alanine. 148–151 is a binding site for ATP; that stretch reads GKKD. Glutamine 154 provides a ligand contact to (R)-pantoate. Residues valine 177 and 185-188 each bind ATP; that span reads RSSR.

The protein belongs to the pantothenate synthetase family. Homodimer.

It localises to the cytoplasm. It carries out the reaction (R)-pantoate + beta-alanine + ATP = (R)-pantothenate + AMP + diphosphate + H(+). It functions in the pathway cofactor biosynthesis; (R)-pantothenate biosynthesis; (R)-pantothenate from (R)-pantoate and beta-alanine: step 1/1. Catalyzes the condensation of pantoate with beta-alanine in an ATP-dependent reaction via a pantoyl-adenylate intermediate. In Staphylococcus haemolyticus (strain JCSC1435), this protein is Pantothenate synthetase.